Reading from the N-terminus, the 261-residue chain is CD40 ligand (261 aa).

At 1–22 (MIETYSQPSPRSVATGPPVSMK) the chain is on the cytoplasmic side. Residues 23–46 (IFMYLLTVFLITQMIGSALFAVYL) form a helical; Signal-anchor for type II membrane protein membrane-spanning segment. At 47 to 261 (HRRLDKIEDE…GFTSFGLLKL (215 aa)) the chain is on the extracellular side. The region spanning 122–261 (IAAHVISEAS…GFTSFGLLKL (140 aa)) is the THD domain. A disulfide bond links Cys-178 and Cys-218. An N-linked (GlcNAc...) asparagine glycan is attached at Asn-240.

Belongs to the tumor necrosis factor family. As to quaternary structure, homotrimer. Interacts with CD28. CD40 ligand, soluble form: Exists as either a monomer or a homotrimer. Forms a ternary complex between CD40 and integrins for CD40-CD40LG signaling. Post-translationally, the soluble form derives from the membrane form by proteolytic processing.

It localises to the cell membrane. Its subcellular location is the cell surface. The protein localises to the secreted. Functionally, cytokine that acts as a ligand to CD40/TNFRSF5. Costimulates T-cell proliferation and cytokine production. Its cross-linking on T-cells generates a costimulatory signal which enhances the production of IL4 and IL10 in conjunction with the TCR/CD3 ligation and CD28 costimulation. Induces the activation of NF-kappa-B. Induces the activation of kinases MAPK8 and PAK2 in T-cells. Mediates B-cell proliferation in the absence of co-stimulus as well as IgE production in the presence of IL4. Involved in immunoglobulin class switching. In terms of biological role, acts as a ligand for integrins, specifically ITGA5:ITGB1 and ITGAV:ITGB3; both integrins and the CD40 receptor are required for activation of CD40-CD40LG signaling, which have cell-type dependent effects, such as B-cell activation, NF-kappa-B signaling and anti-apoptotic signaling. The chain is CD40 ligand (CD40LG) from Bos taurus (Bovine).